We begin with the raw amino-acid sequence, 502 residues long: Glycogen synthase 1 (502 aa).

Lys-18 serves as a coordination point for ADP-alpha-D-glucose.

This sequence belongs to the glycosyltransferase 1 family. Bacterial/plant glycogen synthase subfamily.

It catalyses the reaction [(1-&gt;4)-alpha-D-glucosyl](n) + ADP-alpha-D-glucose = [(1-&gt;4)-alpha-D-glucosyl](n+1) + ADP + H(+). The protein operates within glycan biosynthesis; glycogen biosynthesis. Functionally, synthesizes alpha-1,4-glucan chains using ADP-glucose. This chain is Glycogen synthase 1, found in Geobacter metallireducens (strain ATCC 53774 / DSM 7210 / GS-15).